We begin with the raw amino-acid sequence, 292 residues long: MREIIELYRKVGGFQALHVAEAYDVLKEAVEAADVRFLSFTGNLVATGLREFIADAIRRRLFNVVVTTAGALDHDIAKSMGAVYAPGSFDLDDVDLAAKGYHRLGNVVIKKEEYGPLVEKFILAHCEKLWGKTLATYELAYLLGAELPEDSILGAAARAGAKVFVPGIVDGAVGTALMTCNDLARTKRGGSRAFIDVLKDEEELREIVHNSKKLAALIVGGGISKHHVIWWAQFKGGLDYVVYISTAVEYDGSLSGARPREAISWGKVKPSAKSVFIFADATLVLPVLLKAL.

The Nucleophile role is filled by Lys267.

Belongs to the deoxyhypusine synthase family. Requires NAD(+) as cofactor.

It carries out the reaction [eIF5A protein]-L-lysine + spermidine = [eIF5A protein]-deoxyhypusine + propane-1,3-diamine. It participates in protein modification; eIF5A hypusination. Its function is as follows. Catalyzes the NAD-dependent oxidative cleavage of spermidine and the subsequent transfer of the butylamine moiety of spermidine to the epsilon-amino group of a specific lysine residue of the eIF-5A precursor protein to form the intermediate deoxyhypusine residue. The protein is Probable deoxyhypusine synthase (dys) of Pyrobaculum aerophilum (strain ATCC 51768 / DSM 7523 / JCM 9630 / CIP 104966 / NBRC 100827 / IM2).